The primary structure comprises 82 residues: Small ribosomal subunit protein bS16 (82 aa).

This sequence belongs to the bacterial ribosomal protein bS16 family.

This Francisella tularensis subsp. holarctica (strain FTNF002-00 / FTA) protein is Small ribosomal subunit protein bS16.